The primary structure comprises 292 residues: Recombination-promoting nuclease RpnA (292 aa).

Belongs to the Rpn/YhgA-like nuclease family. Requires Mg(2+) as cofactor.

Inhibited by EDTA, Zn(2+) and by Mg(2+) plus Mn(2+); stimulated by Ca(2+) in the presence of Mg(2+). Functionally, a low activity DNA endonuclease yielding 3'-hydroxyl ends, equally active on ss or dsDNA, not active on dsRNA. Shows no sequence specificity. Upon expression enhances RecA-independent DNA recombination 49-fold, concomitantly reducing viability by 88% and probably inducing DNA damage as measured by induction of the SOS repair response in RecA cells. RecA-independent DNA recombination leads to replacement of recipient genes with large segments of donor DNA rather than DNA addition to the donor strain; increased expression of RpnA leads to smaller replacement segments, suggesting this protein may play a role in generating crossover events. The polypeptide is Recombination-promoting nuclease RpnA (Escherichia coli (strain K12)).